The sequence spans 93 residues: Small ribosomal subunit protein uS19c (93 aa).

It belongs to the universal ribosomal protein uS19 family.

Its subcellular location is the plastid. It localises to the chloroplast. Functionally, protein S19 forms a complex with S13 that binds strongly to the 16S ribosomal RNA. This chain is Small ribosomal subunit protein uS19c, found in Brachypodium distachyon (Purple false brome).